Here is a 160-residue protein sequence, read N- to C-terminus: Flavodoxin (160 aa).

The region spanning 3–153 (ISILYSSKTG…NARIFGERIA (151 aa)) is the Flavodoxin-like domain.

This sequence belongs to the flavodoxin family. FMN is required as a cofactor.

Its function is as follows. Low-potential electron donor to a number of redox enzymes. The protein is Flavodoxin (floX) of Clostridium saccharobutylicum.